The following is a 410-amino-acid chain: Phosphoglycerate kinase (410 aa).

Substrate-binding positions include 24 to 26 (DLN), arginine 40, 63 to 66 (HLGR), arginine 122, and arginine 162. ATP-binding positions include lysine 212, glycine 300, glutamate 331, and 360–363 (GGDS).

It belongs to the phosphoglycerate kinase family. In terms of assembly, monomer.

It localises to the cytoplasm. It carries out the reaction (2R)-3-phosphoglycerate + ATP = (2R)-3-phospho-glyceroyl phosphate + ADP. The protein operates within carbohydrate degradation; glycolysis; pyruvate from D-glyceraldehyde 3-phosphate: step 2/5. In Nocardia farcinica (strain IFM 10152), this protein is Phosphoglycerate kinase.